The sequence spans 73 residues: uncharacterized protein (73 aa).

This is an uncharacterized protein from Invertebrate iridescent virus 6 (IIV-6).